The primary structure comprises 611 residues: Leukotriene A-4 hydrolase (611 aa).

K73 is subject to N6-acetyllysine. A peptide contacts are provided by residues 135 to 137 (QCQ) and 267 to 272 (PYGGME). A Zn(2+)-binding site is contributed by H296. E297 functions as the Proton acceptor in the catalytic mechanism. 2 residues coordinate Zn(2+): H300 and E319. Position 337 is an N6-acetyllysine (K337). Y384 (proton donor) is an active-site residue. Residue K414 is modified to N6-acetyllysine. S416 is modified (phosphoserine). 564–566 (RMK) is a binding site for a peptide. Residue K573 is modified to N6-acetyllysine.

Belongs to the peptidase M1 family. Monomer. Zn(2+) serves as cofactor. In terms of processing, phosphorylation at Ser-416 inhibits leukotriene-A4 hydrolase activity.

The protein resides in the cytoplasm. It catalyses the reaction leukotriene A4 + H2O = leukotriene B4. It carries out the reaction (5S,6S)-epoxy-(18R)-hydroxy-(7E,9E,11Z,14Z,16E)-eicosapentaenoate + H2O = resolvin E1. The catalysed reaction is (5S,6S)-epoxy-(18S)-hydroxy-(7E,9E,11Z,14Z,16E)-eicosapentaenoate + H2O = 18S-resolvin E1. The enzyme catalyses Release of the N-terminal residue from a tripeptide.. It functions in the pathway lipid metabolism; leukotriene B4 biosynthesis. Its activity is regulated as follows. Inhibited by bestatin. The epoxide hydrolase activity is restrained by suicide inactivation that involves binding of LTA4 to Tyr-379. 4-(4-benzylphenyl)thiazol-2-amine (ARM1) selectively inhibits the epoxide hydrolase activity. Its function is as follows. Bifunctional zinc metalloenzyme that comprises both epoxide hydrolase (EH) and aminopeptidase activities. Acts as an epoxide hydrolase to catalyze the conversion of LTA4 to the pro-inflammatory mediator leukotriene B4 (LTB4). Also has aminopeptidase activity, with high affinity for N-terminal arginines of various synthetic tripeptides. In addition to its pro-inflammatory EH activity, may also counteract inflammation by its aminopeptidase activity, which inactivates by cleavage another neutrophil attractant, the tripeptide Pro-Gly-Pro (PGP), a bioactive fragment of collagen generated by the action of matrix metalloproteinase-9 (MMP9) and prolylendopeptidase (PREPL). Involved also in the biosynthesis of resolvin E1 and 18S-resolvin E1 from eicosapentaenoic acid, two lipid mediators that show potent anti-inflammatory and pro-resolving actions. The chain is Leukotriene A-4 hydrolase (Lta4h) from Mus musculus (Mouse).